The chain runs to 540 residues: Glucose-6-phosphate isomerase (540 aa).

E351 functions as the Proton donor in the catalytic mechanism. Catalysis depends on residues H382 and K506.

It belongs to the GPI family.

Its subcellular location is the cytoplasm. The enzyme catalyses alpha-D-glucose 6-phosphate = beta-D-fructose 6-phosphate. The protein operates within carbohydrate biosynthesis; gluconeogenesis. It functions in the pathway carbohydrate degradation; glycolysis; D-glyceraldehyde 3-phosphate and glycerone phosphate from D-glucose: step 2/4. Functionally, catalyzes the reversible isomerization of glucose-6-phosphate to fructose-6-phosphate. This is Glucose-6-phosphate isomerase from Corynebacterium glutamicum (strain ATCC 13032 / DSM 20300 / JCM 1318 / BCRC 11384 / CCUG 27702 / LMG 3730 / NBRC 12168 / NCIMB 10025 / NRRL B-2784 / 534).